The following is a 501-amino-acid chain: Eukaryotic translation initiation factor 3 subunit E (501 aa).

The 179-residue stretch at 245-423 (CDLFFYTPYL…ESIESTSTNV (179 aa)) folds into the PCI domain. 2 positions are modified to phosphoserine: Ser477 and Ser479.

This sequence belongs to the eIF-3 subunit E family. As to quaternary structure, component of the eukaryotic translation initiation factor 3 (eIF-3) complex. The eIF-3 complex appears to include tif32/eif3a, SPAC25G10.08/eif3b, tif33/eif3c, SPBC4C3.07/eif3f, tif35/eif3g and sum1/eif3i. This set of common subunits may also associate exclusively with either moe1/eif3d and int6/eif3e, or with SPAC821.05/eif3h and SPAC1751.03/eif3m. The eIF-3 complex may also include SPAC3A12.13c/eif3j. Also interacts with the proteasome via rpn501/rpn502.

It localises to the cytoplasm. Its function is as follows. Component of the eukaryotic translation initiation factor 3 (eIF-3) complex, which is involved in protein synthesis of a specialized repertoire of mRNAs and, together with other initiation factors, stimulates binding of mRNA and methionyl-tRNAi to the 40S ribosome. The eIF-3 complex specifically targets and initiates translation of a subset of mRNAs involved in cell proliferation (Potential). Required for maintaining the basal level of atf1 and for transcriptional activation of core environmental stress response genes (CESR genes) in response to histidine starvation. May positively regulate proteasome activity. Required for nuclear localization of the proteasome subunit rpn501/rpn502. The sequence is that of Eukaryotic translation initiation factor 3 subunit E (int6) from Schizosaccharomyces pombe (strain 972 / ATCC 24843) (Fission yeast).